A 442-amino-acid polypeptide reads, in one-letter code: Cation channel sperm-associated protein 4 (442 aa).

Residues 1–66 (MSEKHKWWQQ…TQMYIKQLLR (66 aa)) are Cytoplasmic-facing. A helical membrane pass occupies residues 67–88 (HPAFQLLLAFLLLSNAITIALR). At 89–98 (TNSYLGQKHY) the chain is on the extracellular side. A helical transmembrane segment spans residues 99–125 (ELFSTIDDIVLTILICEVLLGWLNGFW). Topologically, residues 126–129 (IFWK) are cytoplasmic. Residues 130 to 153 (DGWNILNFAIVFILFMGFFIKQLD) form a helical membrane-spanning segment. Residues 154 to 156 (MVA) lie on the Extracellular side of the membrane. A helical transmembrane segment spans residues 157-175 (ITYPLRVLRLVHVCMAVEP). Over 176–188 (LARIIKVILQSMP) the chain is Cytoplasmic. A helical membrane pass occupies residues 189 to 212 (DLANVMALILFFMLVFSVFGVTLF). Residues 213-222 (GAFVPKHFQN) lie on the Extracellular side of the membrane. The segment at residues 223–234 (MGVALYTLFICI) is an intramembrane region (helical; Pore-forming). The Extracellular portion of the chain corresponds to 235-255 (TQDGWLDIYTDFQMDEREYAM). The chain crosses the membrane as a helical span at residues 256–283 (EVGGAIYFAVFITLGAFIGLNLFVVVVT). The Cytoplasmic segment spans residues 284–442 (TNLEQMMKTG…NMVNKHKFSH (159 aa)).

This sequence belongs to the cation channel sperm-associated (TC 1.A.1.19) family. Component of the CatSper complex or CatSpermasome composed of the core pore-forming members CATSPER1, CATSPER2, CATSPER3 and CATSPER4 as well as auxiliary members CATSPERB, CATSPERG2, CATSPERD, CATSPERE, CATSPERZ, C2CD6/CATSPERT, SLCO6C1, TMEM249, TMEM262 and EFCAB9. HSPA1 may be an additional auxiliary complex member. The core complex members CATSPER1, CATSPER2, CATSPER3 and CATSPER4 form a heterotetrameric channel. The auxiliary CATSPERB, CATSPERG2, CATSPERD and CATSPERE subunits form a pavilion-like structure over the pore which stabilizes the complex through interactions with CATSPER4, CATSPER3, CATSPER1 and CATSPER2 respectively. SLCO6C1 interacts with CATSPERE and TMEM262/CATSPERH interacts with CATSPERB, further stabilizing the complex. C2CD6/CATSPERT interacts at least with CATSPERD and is required for targeting the CatSper complex in the flagellar membrane. In terms of tissue distribution, testis-specific.

It localises to the cell projection. The protein localises to the cilium. It is found in the flagellum membrane. The enzyme catalyses Ca(2+)(in) = Ca(2+)(out). Its activity is regulated as follows. In contrast to the human ortholog, not activated by progesterone. Activated by intracellular alkalinization. Its function is as follows. Pore-forming subunit of the CatSper complex, a sperm-specific voltage-gated calcium channel that plays a central role in sperm cell hyperactivation. Controls calcium entry to mediate the hyperactivated motility, a step needed for sperm motility which is essential late in the preparation of sperm for fertilization. The polypeptide is Cation channel sperm-associated protein 4 (Catsper4) (Mus musculus (Mouse)).